The following is a 378-amino-acid chain: Ribosomal RNA large subunit methyltransferase G (378 aa).

It belongs to the methyltransferase superfamily. RlmG family.

It is found in the cytoplasm. It catalyses the reaction guanosine(1835) in 23S rRNA + S-adenosyl-L-methionine = N(2)-methylguanosine(1835) in 23S rRNA + S-adenosyl-L-homocysteine + H(+). Functionally, specifically methylates the guanine in position 1835 (m2G1835) of 23S rRNA. The polypeptide is Ribosomal RNA large subunit methyltransferase G (Shewanella baltica (strain OS155 / ATCC BAA-1091)).